A 729-amino-acid polypeptide reads, in one-letter code: Fatty acid oxidation complex subunit alpha (729 aa).

Positions 1 to 189 (MLYKGDTLYL…KIGLVDGVVK (189 aa)) are enoyl-CoA hydratase/isomerase. Residue Asp-296 participates in substrate binding. The 3-hydroxyacyl-CoA dehydrogenase stretch occupies residues 311–729 (ETPKQAAVLG…ARPVGDLKTA (419 aa)). NAD(+)-binding positions include Met-324, Asp-343, 400 to 402 (VVE), Lys-407, and Ser-429. Catalysis depends on His-450, which acts as the For 3-hydroxyacyl-CoA dehydrogenase activity. NAD(+) is bound at residue Asn-453. 2 residues coordinate substrate: Asn-500 and Tyr-660. Residues 708-729 (RHNEPYYPPVEPARPVGDLKTA) form a disordered region.

The protein in the N-terminal section; belongs to the enoyl-CoA hydratase/isomerase family. This sequence in the C-terminal section; belongs to the 3-hydroxyacyl-CoA dehydrogenase family. As to quaternary structure, heterotetramer of two alpha chains (FadB) and two beta chains (FadA).

It carries out the reaction a (3S)-3-hydroxyacyl-CoA + NAD(+) = a 3-oxoacyl-CoA + NADH + H(+). The enzyme catalyses a (3S)-3-hydroxyacyl-CoA = a (2E)-enoyl-CoA + H2O. The catalysed reaction is a 4-saturated-(3S)-3-hydroxyacyl-CoA = a (3E)-enoyl-CoA + H2O. It catalyses the reaction (3S)-3-hydroxybutanoyl-CoA = (3R)-3-hydroxybutanoyl-CoA. It carries out the reaction a (3Z)-enoyl-CoA = a 4-saturated (2E)-enoyl-CoA. The enzyme catalyses a (3E)-enoyl-CoA = a 4-saturated (2E)-enoyl-CoA. It participates in lipid metabolism; fatty acid beta-oxidation. In terms of biological role, involved in the aerobic and anaerobic degradation of long-chain fatty acids via beta-oxidation cycle. Catalyzes the formation of 3-oxoacyl-CoA from enoyl-CoA via L-3-hydroxyacyl-CoA. It can also use D-3-hydroxyacyl-CoA and cis-3-enoyl-CoA as substrate. This chain is Fatty acid oxidation complex subunit alpha, found in Citrobacter koseri (strain ATCC BAA-895 / CDC 4225-83 / SGSC4696).